Reading from the N-terminus, the 155-residue chain is 2-C-methyl-D-erythritol 2,4-cyclodiphosphate synthase (155 aa).

Residues Asp-8 and His-10 each contribute to the a divalent metal cation site. 4-CDP-2-C-methyl-D-erythritol 2-phosphate-binding positions include 8–10 and 34–35; these read DVH and HS. Residue His-42 coordinates a divalent metal cation. 4-CDP-2-C-methyl-D-erythritol 2-phosphate contacts are provided by residues 56–58, 61–65, 132–135, and Arg-142; these read DIG, FPDKD, and TTTE.

The protein belongs to the IspF family. Homotrimer. A divalent metal cation serves as cofactor.

The catalysed reaction is 4-CDP-2-C-methyl-D-erythritol 2-phosphate = 2-C-methyl-D-erythritol 2,4-cyclic diphosphate + CMP. The protein operates within isoprenoid biosynthesis; isopentenyl diphosphate biosynthesis via DXP pathway; isopentenyl diphosphate from 1-deoxy-D-xylulose 5-phosphate: step 4/6. In terms of biological role, involved in the biosynthesis of isopentenyl diphosphate (IPP) and dimethylallyl diphosphate (DMAPP), two major building blocks of isoprenoid compounds. Catalyzes the conversion of 4-diphosphocytidyl-2-C-methyl-D-erythritol 2-phosphate (CDP-ME2P) to 2-C-methyl-D-erythritol 2,4-cyclodiphosphate (ME-CPP) with a corresponding release of cytidine 5-monophosphate (CMP). This Desulfatibacillum aliphaticivorans protein is 2-C-methyl-D-erythritol 2,4-cyclodiphosphate synthase.